A 240-amino-acid chain; its full sequence is Glutamine transport ATP-binding protein GlnQ (240 aa).

In terms of domain architecture, ABC transporter spans 2–236; sequence IEFKNVSKHF…PPSQRLQEFL (235 aa). 34–41 serves as a coordination point for ATP; it reads GPSGSGKS.

The protein belongs to the ABC transporter superfamily. As to quaternary structure, heterotetramer with 2 subunits of GlnQ and 2 subunits of GlnP.

The protein resides in the cell inner membrane. Part of the binding-protein-dependent transport system for glutamine. Probably responsible for energy coupling to the transport system. This is Glutamine transport ATP-binding protein GlnQ (glnQ) from Escherichia coli (strain K12).